Here is a 252-residue protein sequence, read N- to C-terminus: Sugar fermentation stimulation protein homolog (252 aa).

This sequence belongs to the SfsA family.

In Picosynechococcus sp. (strain ATCC 27264 / PCC 7002 / PR-6) (Agmenellum quadruplicatum), this protein is Sugar fermentation stimulation protein homolog.